A 78-amino-acid polypeptide reads, in one-letter code: ATP synthase subunit c (78 aa).

Transmembrane regions (helical) follow at residues 16–36 (LATL…ASFL) and 57–77 (MALA…ILFV).

The protein belongs to the ATPase C chain family. As to quaternary structure, F-type ATPases have 2 components, F(1) - the catalytic core - and F(0) - the membrane proton channel. F(1) has five subunits: alpha(3), beta(3), gamma(1), delta(1), epsilon(1). F(0) has three main subunits: a(1), b(2) and c(10-14). The alpha and beta chains form an alternating ring which encloses part of the gamma chain. F(1) is attached to F(0) by a central stalk formed by the gamma and epsilon chains, while a peripheral stalk is formed by the delta and b chains.

Its subcellular location is the cell inner membrane. Functionally, f(1)F(0) ATP synthase produces ATP from ADP in the presence of a proton or sodium gradient. F-type ATPases consist of two structural domains, F(1) containing the extramembraneous catalytic core and F(0) containing the membrane proton channel, linked together by a central stalk and a peripheral stalk. During catalysis, ATP synthesis in the catalytic domain of F(1) is coupled via a rotary mechanism of the central stalk subunits to proton translocation. Its function is as follows. Key component of the F(0) channel; it plays a direct role in translocation across the membrane. A homomeric c-ring of between 10-14 subunits forms the central stalk rotor element with the F(1) delta and epsilon subunits. The chain is ATP synthase subunit c from Hyphomonas neptunium (strain ATCC 15444).